A 148-amino-acid polypeptide reads, in one-letter code: ATP synthase epsilon chain (148 aa).

It belongs to the ATPase epsilon chain family. In terms of assembly, F-type ATPases have 2 components, CF(1) - the catalytic core - and CF(0) - the membrane proton channel. CF(1) has five subunits: alpha(3), beta(3), gamma(1), delta(1), epsilon(1). CF(0) has three main subunits: a, b and c.

The protein resides in the cell inner membrane. Produces ATP from ADP in the presence of a proton gradient across the membrane. This Paracoccus denitrificans (strain Pd 1222) protein is ATP synthase epsilon chain.